The chain runs to 101 residues: Small ribosomal subunit protein uS14 (101 aa).

It belongs to the universal ribosomal protein uS14 family. As to quaternary structure, part of the 30S ribosomal subunit. Contacts proteins S3 and S10.

Functionally, binds 16S rRNA, required for the assembly of 30S particles and may also be responsible for determining the conformation of the 16S rRNA at the A site. This Actinobacillus pleuropneumoniae serotype 3 (strain JL03) protein is Small ribosomal subunit protein uS14.